Here is a 161-residue protein sequence, read N- to C-terminus: Sec-independent protein translocase protein TatB (161 aa).

A helical transmembrane segment spans residues 2 to 22 (FNDIGALELVTLVVLAVLVFG). The segment at 102 to 161 (DAVHGRDAESSSSGSSSGSSSAASGNGRVDMSKKPEKPEKPGKTDKPAADDRPPFDMDAT) is disordered. The segment covering 111-126 (SSSSGSSSGSSSAASG) has biased composition (low complexity). Positions 131–161 (DMSKKPEKPEKPGKTDKPAADDRPPFDMDAT) are enriched in basic and acidic residues.

The protein belongs to the TatB family. The Tat system comprises two distinct complexes: a TatABC complex, containing multiple copies of TatA, TatB and TatC subunits, and a separate TatA complex, containing only TatA subunits. Substrates initially bind to the TatABC complex, which probably triggers association of the separate TatA complex to form the active translocon.

It is found in the cell membrane. Its function is as follows. Part of the twin-arginine translocation (Tat) system that transports large folded proteins containing a characteristic twin-arginine motif in their signal peptide across membranes. Together with TatC, TatB is part of a receptor directly interacting with Tat signal peptides. TatB may form an oligomeric binding site that transiently accommodates folded Tat precursor proteins before their translocation. This is Sec-independent protein translocase protein TatB from Streptomyces coelicolor (strain ATCC BAA-471 / A3(2) / M145).